A 399-amino-acid chain; its full sequence is Zinc metalloproteinase nas-25 (399 aa).

An N-terminal signal peptide occupies residues 1 to 20 (MQIYLGITICLVAFLTVIDC). The Peptidase M12A domain occupies 41-237 (QVQRDLTYRW…DQINQYYQCY (197 aa)). Asparagine 52 and asparagine 61 each carry an N-linked (GlcNAc...) asparagine glycan. 4 disulfide bridges follow: cysteine 82–cysteine 236, cysteine 106–cysteine 126, cysteine 240–cysteine 260, and cysteine 265–cysteine 274. Zn(2+) is bound at residue histidine 134. Glutamate 135 is a catalytic residue. Zn(2+)-binding residues include histidine 138 and histidine 144. Residues 232 to 275 (QYYQCYDSCRNAGQLANCANGGIPNPNNCQVCNCPMGYGGDLCD) enclose the EGF-like domain. An N-linked (GlcNAc...) asparagine glycan is attached at asparagine 371.

Zn(2+) serves as cofactor. In terms of tissue distribution, expressed in pharyngeal muscles, pharyngeal-intestinal valve, rectal gland cells and arcade cells.

It is found in the secreted. Functionally, metalloprotease. This chain is Zinc metalloproteinase nas-25 (nas-25), found in Caenorhabditis elegans.